The chain runs to 119 residues: Large ribosomal subunit protein bL19 (119 aa).

This sequence belongs to the bacterial ribosomal protein bL19 family.

This protein is located at the 30S-50S ribosomal subunit interface and may play a role in the structure and function of the aminoacyl-tRNA binding site. The chain is Large ribosomal subunit protein bL19 from Leuconostoc mesenteroides subsp. mesenteroides (strain ATCC 8293 / DSM 20343 / BCRC 11652 / CCM 1803 / JCM 6124 / NCDO 523 / NBRC 100496 / NCIMB 8023 / NCTC 12954 / NRRL B-1118 / 37Y).